The following is a 313-amino-acid chain: Protein EMSY-LIKE 2 (313 aa).

The ENT domain maps to 1-88; it reads MEAQIHILEQ…HQSLDVHPSP (88 aa). The stretch at 35 to 58 forms a coiled coil; sequence MTNLRKELRISDDENRQLLNNVHN. Disordered regions lie at residues 84–106 and 195–229; these read VHPSPTFSASRKKQKTFQSYPSI and LNVGHGGGTTRGNRRTLSHGGRGRGPRTQPRREHL. A compositionally biased stretch (basic residues) spans 206–219; it reads GNRRTLSHGGRGRG. Residues 267-293 adopt a coiled-coil conformation; the sequence is HELDKAKKLLKEHEQALIAAIARLTDA. Ser294 bears the Phosphoserine mark. Residues 294–313 form a disordered region; that stretch reads SDYESDGEEPYSHELPMLLG.

In terms of assembly, interacts with EDM2 in nucleus.

The protein localises to the nucleus. Functionally, probably involved in the regulation of chromatin states. Contributes to RPP7-mediated and basal immunity, especially against Hyaloperonospora arabidopsidis isolate Hiks1. Regulates negatively EDM2-dependent floral transition. This chain is Protein EMSY-LIKE 2, found in Arabidopsis thaliana (Mouse-ear cress).